A 1079-amino-acid polypeptide reads, in one-letter code: MYKAKDTEYKLGSPIHEKIPSFEIGSDRRLDIDDNEGEEVSARDEHDDDEDYEYKRIIEEEFENDREFKDEHGFEIGVVDNDENNDQDCEADTSKSIGSLPRMPGTYDFSGLKSDDNQYNELTETLNQDDGNQSNDIAVGKLGDEASHTYKSTLDPGKPLQNPPPSNLNIDSILKSQLENNKSEGSIGQRIDSISRKTTNSSGGPNIMKDNTLDRIPTHDYENIDDNNVFNRAGDPKIRGGLNASNDASINDNIADISQSTIQTSTDAGESINKGNGDITKGLSNVDVNDTSVNKSKQRNISSGSVIRNPPSASQANQSNQSYHQTRAITPVMNQMNKFQGSNSEASSPREHLGMGINNSAPSTGANSNTSSPMNGSYPNSIAKSRRSGNRVKGVFSNMFSKNKTSTSVTSSPETHAINMKISTPFNAKHVAHVGVDDNGSYTGLPIEWERLLSASGISKKEQQQHPQAVMDIVAFYQDTNDDNPDENAFKKFHYDNDSSHSSIYNATPPSTPGIPSTYNATPLQSEKQLQRQQSQKSQSSHPVQVQSTPKTPNNNYENQFIPSRPAPKPPSSSIPSTKTIKPPPVPPSPSTNTNISPASKKNSFMGRSFSSKSIKALRNSNRKISEPPKAPQSKISDSNTEMGIPKSKSHSNSLSTQSEVEPTKGSTTAPVSSTAKFNSTTINNINGHNIIEEEKNNNTLLSNPKQREQKPDSTIEKRDTPPSPSQSRVSEEESTKKETSEKYNNKENDIPKKSSQQPVRDAKQAALLAQKKREDKKRKNQQIISKLQQICSEGDPNELYKDLMKIGQGASGGVYIAHDVNHRSQTVAIKQMNLEQQPKKELIINEILVMKGSKHENIVNFIDSYLLRGDLWVVMEYMEGGSLTEIVTHSVMTEGQIGAVCRETLKGLRFLHSKGVIHRDIKSDNILLNIDGNIKMTDFGFCAQINEINLKRTTMVGTPYWMAPEVVSRKEYGPKVDVWSLGIMIIEMIEGEPPYLNETPLRALYLIATNGTPKLKEPEALSYDIRKFLSWCLQVDFNKRGNADQLLNDKFILEADDVESLSPLVKIAAMKKATELDE.

The span at 21–32 shows a compositional bias: basic and acidic residues; that stretch reads SFEIGSDRRLDI. Disordered stretches follow at residues 21–50, 79–116, 148–220, 261–323, and 339–389; these read SFEI…DDDE, VDND…KSDD, HTYK…PTHD, TIQT…NQSY, and FQGS…RRSG. The span at 80 to 91 shows a compositional bias: acidic residues; the sequence is DNDENNDQDCEA. A compositionally biased stretch (polar residues) spans 167–186; sequence NLNIDSILKSQLENNKSEGS. Residues 211-220 show a composition bias toward basic and acidic residues; it reads NTLDRIPTHD. Residues 282–306 show a composition bias toward polar residues; sequence GLSNVDVNDTSVNKSKQRNISSGSV. Residues 309-322 show a composition bias toward low complexity; the sequence is NPPSASQANQSNQS. Residues 357 to 383 show a composition bias toward polar residues; sequence INNSAPSTGANSNTSSPMNGSYPNSIA. Residues 422–435 enclose the CRIB domain; it reads ISTPFNAKHVAHVG. A compositionally biased stretch (polar residues) spans 501 to 522; that stretch reads HSSIYNATPPSTPGIPSTYNAT. Residues 501 to 766 are disordered; sequence HSSIYNATPP…QQPVRDAKQA (266 aa). Residues 523–548 are compositionally biased toward low complexity; that stretch reads PLQSEKQLQRQQSQKSQSSHPVQVQS. The segment covering 549-561 has biased composition (polar residues); it reads TPKTPNNNYENQF. Residues 591 to 600 show a composition bias toward low complexity; that stretch reads STNTNISPAS. Polar residues predominate over residues 651–678; that stretch reads HSNSLSTQSEVEPTKGSTTAPVSSTAKF. The span at 679 to 690 shows a compositional bias: low complexity; that stretch reads NSTTINNINGHN. Basic and acidic residues-rich tracts occupy residues 706–721 and 730–753; these read KQRE…KRDT and VSEE…DIPK. A Protein kinase domain is found at 801-1053; the sequence is YKDLMKIGQG…ADQLLNDKFI (253 aa). Residues 807 to 815 and lysine 831 each bind ATP; that span reads IGQGASGGV. The Proton acceptor role is filled by aspartate 921.

Belongs to the protein kinase superfamily. STE Ser/Thr protein kinase family. STE20 subfamily.

The protein resides in the cytoplasm. The protein localises to the nucleus. It catalyses the reaction L-seryl-[protein] + ATP = O-phospho-L-seryl-[protein] + ADP + H(+). The enzyme catalyses L-threonyl-[protein] + ATP = O-phospho-L-threonyl-[protein] + ADP + H(+). Functionally, MAP4K component of the MAPK pathway required for the mating pheromone response and the regulation of cell polarity and cell cycle. Phosphorylates histone H2B to form H2BS10ph. This is Serine/threonine-protein kinase STE20 (STE20) from Debaryomyces hansenii (strain ATCC 36239 / CBS 767 / BCRC 21394 / JCM 1990 / NBRC 0083 / IGC 2968) (Yeast).